Consider the following 504-residue polypeptide: Glutamate--tRNA ligase (504 aa).

The 'HIGH' region motif lies at 14–24 (PSPTGYLHVGG). Positions 261–265 (KLSKR) match the 'KMSKS' region motif. Position 264 (Lys-264) interacts with ATP.

This sequence belongs to the class-I aminoacyl-tRNA synthetase family. Glutamate--tRNA ligase type 1 subfamily. Monomer.

The protein localises to the cytoplasm. It catalyses the reaction tRNA(Glu) + L-glutamate + ATP = L-glutamyl-tRNA(Glu) + AMP + diphosphate. In terms of biological role, catalyzes the attachment of glutamate to tRNA(Glu) in a two-step reaction: glutamate is first activated by ATP to form Glu-AMP and then transferred to the acceptor end of tRNA(Glu). The protein is Glutamate--tRNA ligase of Chlorobium luteolum (strain DSM 273 / BCRC 81028 / 2530) (Pelodictyon luteolum).